A 430-amino-acid polypeptide reads, in one-letter code: Tol-Pal system protein TolB (430 aa).

The N-terminal stretch at 1–21 (MKQALRVAFGFLILWASVLHA) is a signal peptide.

The protein belongs to the TolB family. As to quaternary structure, the Tol-Pal system is composed of five core proteins: the inner membrane proteins TolA, TolQ and TolR, the periplasmic protein TolB and the outer membrane protein Pal. They form a network linking the inner and outer membranes and the peptidoglycan layer.

The protein localises to the periplasm. Part of the Tol-Pal system, which plays a role in outer membrane invagination during cell division and is important for maintaining outer membrane integrity. TolB occupies a key intermediary position in the Tol-Pal system because it communicates directly with both membrane-embedded components, Pal in the outer membrane and TolA in the inner membrane. The sequence is that of Tol-Pal system protein TolB from Escherichia coli O139:H28 (strain E24377A / ETEC).